An 83-amino-acid chain; its full sequence is RNA-binding protein Hfq (83 aa).

In terms of domain architecture, Sm spans 9–68; it reads DPYLNILRKERIPVSIFLVNGIKLQGQIESFDQFVILLRNTVSQMVYKHAISTVVPSRNV.

The protein belongs to the Hfq family. In terms of assembly, homohexamer.

Functionally, RNA chaperone that binds small regulatory RNA (sRNAs) and mRNAs to facilitate mRNA translational regulation in response to envelope stress, environmental stress and changes in metabolite concentrations. Also binds with high specificity to tRNAs. The sequence is that of RNA-binding protein Hfq from Chromohalobacter salexigens (strain ATCC BAA-138 / DSM 3043 / CIP 106854 / NCIMB 13768 / 1H11).